A 393-amino-acid chain; its full sequence is S-adenosylmethionine synthase 2 (393 aa).

A Mg(2+)-binding site is contributed by Glu9. Residue His15 coordinates ATP. Residue Glu43 participates in K(+) binding. L-methionine is bound by residues Glu56 and Gln99. ATP contacts are provided by residues 167 to 169, 235 to 238, Asp246, 252 to 253, Ala269, Lys273, and Lys277; these read DGK, SGRF, and RK. Asp246 provides a ligand contact to L-methionine. Lys277 is an L-methionine binding site.

The protein belongs to the AdoMet synthase family. As to quaternary structure, homotetramer. Interacts with GRF3. Mn(2+) is required as a cofactor. Mg(2+) serves as cofactor. It depends on Co(2+) as a cofactor. Requires K(+) as cofactor. As to expression, highly expressed in stems and roots. Detected in trichomes (at the protein level).

It is found in the cytoplasm. The enzyme catalyses L-methionine + ATP + H2O = S-adenosyl-L-methionine + phosphate + diphosphate. Its pathway is amino-acid biosynthesis; S-adenosyl-L-methionine biosynthesis; S-adenosyl-L-methionine from L-methionine: step 1/1. Its activity is regulated as follows. Inhibited by 5,5'-dithiobis-2-nitrobenzoic acid (DTNB) and N-ethylmaleimide (NEM) (in vitro). Functionally, catalyzes the formation of S-adenosylmethionine from methionine and ATP. The reaction comprises two steps that are both catalyzed by the same enzyme: formation of S-adenosylmethionine (AdoMet) and triphosphate, and subsequent hydrolysis of the triphosphate. The chain is S-adenosylmethionine synthase 2 (SAM2) from Arabidopsis thaliana (Mouse-ear cress).